Consider the following 103-residue polypeptide: MSGRGKGGKGLGKGGAKRHRKVLRDNIQGITKPAIRRLARRGGVKRISNTIYEETRGVLKTFLENVIRDAVTYTEHARRKTVTAMDVVYALKRQGRTLYGFGG.

Residues 1–14 (MSGRGKGGKGLGKG) are compositionally biased toward gly residues. The disordered stretch occupies residues 1-20 (MSGRGKGGKGLGKGGAKRHR). Residues 17–21 (KRHRK) mediate DNA binding.

It belongs to the histone H4 family. In terms of assembly, the nucleosome is a histone octamer containing two molecules each of H2A, H2B, H3 and H4 assembled in one H3-H4 heterotetramer and two H2A-H2B heterodimers. The octamer wraps approximately 147 bp of DNA.

The protein localises to the nucleus. Its subcellular location is the chromosome. Functionally, core component of nucleosome. Nucleosomes wrap and compact DNA into chromatin, limiting DNA accessibility to the cellular machineries which require DNA as a template. Histones thereby play a central role in transcription regulation, DNA repair, DNA replication and chromosomal stability. DNA accessibility is regulated via a complex set of post-translational modifications of histones, also called histone code, and nucleosome remodeling. This Physarum polycephalum (Slime mold) protein is Histone H4 (H41).